The sequence spans 510 residues: 2,3-bisphosphoglycerate-independent phosphoglycerate mutase (510 aa).

Mn(2+) contacts are provided by Asp12 and Ser62. Ser62 functions as the Phosphoserine intermediate in the catalytic mechanism. Residues His123, 153–154, Arg185, Arg191, 260–263, and Lys335 contribute to the substrate site; these read RD and RPDR. 5 residues coordinate Mn(2+): Asp402, His406, Asp443, His444, and His461.

The protein belongs to the BPG-independent phosphoglycerate mutase family. Monomer. It depends on Mn(2+) as a cofactor.

The catalysed reaction is (2R)-2-phosphoglycerate = (2R)-3-phosphoglycerate. The protein operates within carbohydrate degradation; glycolysis; pyruvate from D-glyceraldehyde 3-phosphate: step 3/5. In terms of biological role, catalyzes the interconversion of 2-phosphoglycerate and 3-phosphoglycerate. The chain is 2,3-bisphosphoglycerate-independent phosphoglycerate mutase from Listeria monocytogenes serovar 1/2a (strain ATCC BAA-679 / EGD-e).